Consider the following 26-residue polypeptide: Photosystem II stability/assembly factor HCF136, chloroplastic (26 aa).

Belongs to the Ycf48 family.

It is found in the plastid. Its subcellular location is the chloroplast thylakoid lumen. Functionally, essential for photosystem II (PSII) biogenesis; required for assembly of an early intermediate in PSII assembly that includes D2 (psbD) and cytochrome b559. This chain is Photosystem II stability/assembly factor HCF136, chloroplastic, found in Populus euphratica (Euphrates poplar).